The chain runs to 853 residues: DNA mismatch repair protein MutS (853 aa).

ATP is bound at residue 614–621 (GPNMGGKS).

The protein belongs to the DNA mismatch repair MutS family.

Its function is as follows. This protein is involved in the repair of mismatches in DNA. It is possible that it carries out the mismatch recognition step. This protein has a weak ATPase activity. This is DNA mismatch repair protein MutS from Shigella flexneri serotype 5b (strain 8401).